The chain runs to 241 residues: Probable transcriptional regulatory protein Rmet_0785 (241 aa).

The protein belongs to the TACO1 family.

Its subcellular location is the cytoplasm. This is Probable transcriptional regulatory protein Rmet_0785 from Cupriavidus metallidurans (strain ATCC 43123 / DSM 2839 / NBRC 102507 / CH34) (Ralstonia metallidurans).